The chain runs to 372 residues: Alanine racemase (372 aa).

Lys37 functions as the Proton acceptor; specific for D-alanine in the catalytic mechanism. Lys37 carries the post-translational modification N6-(pyridoxal phosphate)lysine. Residue Arg136 coordinates substrate. The active-site Proton acceptor; specific for L-alanine is the Tyr265. Met313 contributes to the substrate binding site.

The protein belongs to the alanine racemase family. The cofactor is pyridoxal 5'-phosphate.

The enzyme catalyses L-alanine = D-alanine. It functions in the pathway amino-acid biosynthesis; D-alanine biosynthesis; D-alanine from L-alanine: step 1/1. Functionally, catalyzes the interconversion of L-alanine and D-alanine. May also act on other amino acids. This chain is Alanine racemase (alr), found in Synechocystis sp. (strain ATCC 27184 / PCC 6803 / Kazusa).